Here is a 59-residue protein sequence, read N- to C-terminus: Large ribosomal subunit protein uL30 (59 aa).

It belongs to the universal ribosomal protein uL30 family. In terms of assembly, part of the 50S ribosomal subunit.

In Desulforamulus reducens (strain ATCC BAA-1160 / DSM 100696 / MI-1) (Desulfotomaculum reducens), this protein is Large ribosomal subunit protein uL30.